The following is a 209-amino-acid chain: Transmembrane protein 52 (209 aa).

Positions 1–32 (MARGPLAARGLRLLLPLLPLLPLLPLPQVALG) are cleaved as a signal peptide. Residues 56-76 (VGLILLAVLLLLLCGVTAGCV) form a helical membrane-spanning segment. The segment at 145–209 (AYSLYTPEPP…QLPPCSPGAP (65 aa)) is disordered. Residues 159-170 (EAVKMAKPREEG) show a composition bias toward basic and acidic residues. Positions 186–202 (LETTPVPQESGPNTQLP) are enriched in polar residues.

The protein resides in the membrane. In Homo sapiens (Human), this protein is Transmembrane protein 52 (TMEM52).